A 227-amino-acid chain; its full sequence is 27 kDa glycoprotein (227 aa).

Positions 1 to 17 (MMWKTVLITIFAAGVLA) are cleaved as a signal peptide. Residues Asn118 and Asn173 are each glycosylated (N-linked (GlcNAc...) asparagine).

This sequence belongs to the UPF0408 family. As to expression, expressed in the subesophageal body, fat bodies, hemocytes, midgut and Malpighian tubules. Not expressed in silk glands.

The protein localises to the secreted. The sequence is that of 27 kDa glycoprotein from Bombyx mori (Silk moth).